The chain runs to 542 residues: Chaperonin GroEL 2 (542 aa).

Residues 30–33, Lys-51, 87–91, Gly-415, and Asp-495 each bind ATP; these read TLGP and DGTTT.

The protein belongs to the chaperonin (HSP60) family. As to quaternary structure, forms a cylinder of 14 subunits composed of two heptameric rings stacked back-to-back. Interacts with the co-chaperonin GroES.

The protein resides in the cytoplasm. It catalyses the reaction ATP + H2O + a folded polypeptide = ADP + phosphate + an unfolded polypeptide.. In terms of biological role, together with its co-chaperonin GroES, plays an essential role in assisting protein folding. The GroEL-GroES system forms a nano-cage that allows encapsulation of the non-native substrate proteins and provides a physical environment optimized to promote and accelerate protein folding. This is Chaperonin GroEL 2 from Methylococcus capsulatus (strain ATCC 33009 / NCIMB 11132 / Bath).